Consider the following 88-residue polypeptide: Toxin ICK-12 (88 aa).

The signal sequence occupies residues 1–19 (MKSIVYMLLFCTFTVVILG). Intrachain disulfides connect C41–C55, C41–C78, C54–C67, and C81–C88.

The protein belongs to the neurotoxin 27 (Jztx-72) family. ICK-41 subfamily. In terms of tissue distribution, expressed by the venom gland.

It localises to the secreted. In terms of biological role, probable neurotoxin with ion channel impairing activity. In Trittame loki (Brush-footed trapdoor spider), this protein is Toxin ICK-12.